The primary structure comprises 471 residues: Cysteine--tRNA ligase (471 aa).

Position 30 (cysteine 30) interacts with Zn(2+). The 'HIGH' region signature appears at 32-42 (PTVYNFAHIGN). Zn(2+) is bound by residues cysteine 212, histidine 237, and glutamate 241. Residues 270–274 (KMSKS) carry the 'KMSKS' region motif. Lysine 273 provides a ligand contact to ATP.

Belongs to the class-I aminoacyl-tRNA synthetase family. In terms of assembly, monomer. Requires Zn(2+) as cofactor.

The protein localises to the cytoplasm. The enzyme catalyses tRNA(Cys) + L-cysteine + ATP = L-cysteinyl-tRNA(Cys) + AMP + diphosphate. This chain is Cysteine--tRNA ligase, found in Leptospira interrogans serogroup Icterohaemorrhagiae serovar Lai (strain 56601).